We begin with the raw amino-acid sequence, 314 residues long: Lipoyl synthase (314 aa).

Residues cysteine 61, cysteine 66, cysteine 72, cysteine 87, cysteine 91, cysteine 94, and serine 301 each coordinate [4Fe-4S] cluster. The 218-residue stretch at 73 to 290 (FGRGTATFMI…ERIATNLGFS (218 aa)) folds into the Radical SAM core domain.

Belongs to the radical SAM superfamily. Lipoyl synthase family. The cofactor is [4Fe-4S] cluster.

The protein resides in the cytoplasm. The enzyme catalyses [[Fe-S] cluster scaffold protein carrying a second [4Fe-4S](2+) cluster] + N(6)-octanoyl-L-lysyl-[protein] + 2 oxidized [2Fe-2S]-[ferredoxin] + 2 S-adenosyl-L-methionine + 4 H(+) = [[Fe-S] cluster scaffold protein] + N(6)-[(R)-dihydrolipoyl]-L-lysyl-[protein] + 4 Fe(3+) + 2 hydrogen sulfide + 2 5'-deoxyadenosine + 2 L-methionine + 2 reduced [2Fe-2S]-[ferredoxin]. It participates in protein modification; protein lipoylation via endogenous pathway; protein N(6)-(lipoyl)lysine from octanoyl-[acyl-carrier-protein]: step 2/2. Its function is as follows. Catalyzes the radical-mediated insertion of two sulfur atoms into the C-6 and C-8 positions of the octanoyl moiety bound to the lipoyl domains of lipoate-dependent enzymes, thereby converting the octanoylated domains into lipoylated derivatives. The protein is Lipoyl synthase of Nitrosomonas eutropha (strain DSM 101675 / C91 / Nm57).